The sequence spans 250 residues: Nuclear transcription factor Y subunit C-4 (250 aa).

Positions 219–250 are disordered; the sequence is GIAYGGQQGHPGYLWQDPQEQQEEPPAEQQSD. A compositionally biased stretch (acidic residues) spans 238-250; sequence EQQEEPPAEQQSD.

This sequence belongs to the NFYC/HAP5 subunit family. Heterotrimeric transcription factor composed of three components, NF-YA, NF-YB and NF-YC. NF-YB and NF-YC must interact and dimerize for NF-YA association and DNA binding. Interacts with NFYB2. Interacts with NFYB8, NFYB10 and HD5/NFYB11.

Its subcellular location is the nucleus. It is found in the cytoplasm. Functionally, probable transcription factor involved in the regulation of flowering time under long day (LD) conditions. Functions as a repressor of flowering, independently of HD1 and GHD7. Controls flowering time by negatively regulating the expression of EHD1 and HD3A. Component of the NF-Y/HAP transcription factor complex. In Oryza sativa subsp. japonica (Rice), this protein is Nuclear transcription factor Y subunit C-4.